The following is a 259-amino-acid chain: 3'-5' ssDNA/RNA exonuclease TatD (259 aa).

Residues Glu92, His128, and His153 each coordinate a divalent metal cation.

The protein belongs to the metallo-dependent hydrolases superfamily. TatD-type hydrolase family. TatD subfamily. In terms of assembly, monomer. It depends on Mg(2+) as a cofactor.

It is found in the cytoplasm. Functionally, 3'-5' exonuclease that prefers single-stranded DNA and RNA. May play a role in the H(2)O(2)-induced DNA damage repair. The protein is 3'-5' ssDNA/RNA exonuclease TatD of Erwinia amylovora (strain ATCC 49946 / CCPPB 0273 / Ea273 / 27-3).